A 631-amino-acid chain; its full sequence is Probable sulfate transporter 3.3 (631 aa).

At 1 to 69 (MEVHKVVAPP…EYSFSLLKSD (69 aa)) the chain is on the cytoplasmic side. Residues 70–90 (VVSGLTIASLAIPQGISYAKL) form a helical membrane-spanning segment. Over 91–92 (AN) the chain is Extracellular. The helical transmembrane segment at 93–113 (LPPIVGLYSSFVPPLVYAVLG) threads the bilayer. Residues 114–117 (SSRD) are Cytoplasmic-facing. The chain crosses the membrane as a helical span at residues 118-138 (LAVGPVSIASLILGSMLRQQV). Residues 139 to 144 (SPVDDP) are Extracellular-facing. A helical transmembrane segment spans residues 145-165 (VLFLQLAFSSTFFAGLFQASL). Over 166–171 (GILRLG) the chain is Cytoplasmic. The helical transmembrane segment at 172–192 (FIIDFLSKATLIGFMGGAAII) threads the bilayer. At 193–223 (VSLQQLKGLLGITHFTKHMSVVPVLSSVFQH) the chain is on the extracellular side. A helical membrane pass occupies residues 224–244 (TNEWSWQTIVMGVCFLLFLLS). The Cytoplasmic segment spans residues 245–256 (TRHLSMKKPKLF). A helical transmembrane segment spans residues 257–277 (WVSAGAPLLSVIVSTLLVFVF). At 278–309 (RAERHGISVIGKLPEGLNPPSWNMLQFHGSHL) the chain is on the extracellular side. Residues 310–330 (ALVAKTGLVTGIVSLTEGIAV) form a helical membrane-spanning segment. The Cytoplasmic segment spans residues 331–347 (GRTFAALKNYHVDGNKE). A helical membrane pass occupies residues 348-368 (MIAIGLMNVVGSATSCYVTTG). The Extracellular portion of the chain corresponds to 369–384 (AFSRSAVNNNAGAKTA). The helical transmembrane segment at 385–405 (VSNIVMSVTVMVTLLFLMPLF) threads the bilayer. Residues 406–410 (EYTPN) lie on the Cytoplasmic side of the membrane. Residues 411–431 (VVLGAIIVTAVIGLIDLPAAC) form a helical membrane-spanning segment. Residues 432 to 441 (HIWKIDKFDF) are Extracellular-facing. The helical transmembrane segment at 442 to 462 (LVMLCAFFGVIFLSVQNGLAI) threads the bilayer. Topologically, residues 463–631 (AVGLSLFKIL…SLKGPSLSNV (169 aa)) are cytoplasmic. The STAS domain maps to 497-621 (HYKEAQRIPG…LTVAEAVASL (125 aa)).

Belongs to the SLC26A/SulP transporter (TC 2.A.53) family. In terms of tissue distribution, expressed only in leaves.

It localises to the membrane. H(+)/sulfate cotransporter that may play a role in the regulation of sulfate assimilation. This is Probable sulfate transporter 3.3 (SULTR3;3) from Arabidopsis thaliana (Mouse-ear cress).